The following is a 109-amino-acid chain: Large ribosomal subunit protein uL24 (109 aa).

Belongs to the universal ribosomal protein uL24 family. In terms of assembly, part of the 50S ribosomal subunit.

Its function is as follows. One of two assembly initiator proteins, it binds directly to the 5'-end of the 23S rRNA, where it nucleates assembly of the 50S subunit. Functionally, one of the proteins that surrounds the polypeptide exit tunnel on the outside of the subunit. This is Large ribosomal subunit protein uL24 from Syntrophobacter fumaroxidans (strain DSM 10017 / MPOB).